A 75-amino-acid chain; its full sequence is UPF0181 protein ETA_15280 (75 aa).

This sequence belongs to the UPF0181 family.

The protein is UPF0181 protein ETA_15280 of Erwinia tasmaniensis (strain DSM 17950 / CFBP 7177 / CIP 109463 / NCPPB 4357 / Et1/99).